Reading from the N-terminus, the 387-residue chain is MNIHEYQAKAIFADNGIPTLKGKVAFSVDEAVSNAKELGGSVWAVKAQIHAGGRGLGGGVKIAKNLDEVKDYASKILGMNLATHQTGPEGKLVQKLYIESGANIVKEYYLAILFNRMAEQITIIASSEGGMDIEKVAKESPEKIAKVGIDPQIGFKMFHGLEVARVLGLDKDEGKKLISMIAKLYKLYMDKDMNMLEINPLIKTAEGDFYALDAKCSFDDSALYRHPEIAELRDITEENPAEREAAEFGLSYVKLDGDVACMVNGAGLAMATMDIINYSGAKPANFLDVGGGASPETVAKAFEIILRDKNVKVIFINIFGGIVRCDRIANGILEATKNVEVNIPIVVRLDGTNAAEAKTILDNSNLKNIKAATNLKNGAELVKSLVG.

The region spanning Lys9–Glu244 is the ATP-grasp domain. Residues Lys46, Gly53–Gly55, Glu99, Ala102, and Glu107 each bind ATP. Residues Asn199 and Asp213 each contribute to the Mg(2+) site. Substrate contacts are provided by residues Asn264 and Gly321–Val323.

The protein belongs to the succinate/malate CoA ligase beta subunit family. Heterotetramer of two alpha and two beta subunits. Mg(2+) is required as a cofactor.

The catalysed reaction is succinate + ATP + CoA = succinyl-CoA + ADP + phosphate. The enzyme catalyses GTP + succinate + CoA = succinyl-CoA + GDP + phosphate. It functions in the pathway carbohydrate metabolism; tricarboxylic acid cycle; succinate from succinyl-CoA (ligase route): step 1/1. Its function is as follows. Succinyl-CoA synthetase functions in the citric acid cycle (TCA), coupling the hydrolysis of succinyl-CoA to the synthesis of either ATP or GTP and thus represents the only step of substrate-level phosphorylation in the TCA. The beta subunit provides nucleotide specificity of the enzyme and binds the substrate succinate, while the binding sites for coenzyme A and phosphate are found in the alpha subunit. In Campylobacter jejuni subsp. jejuni serotype O:6 (strain 81116 / NCTC 11828), this protein is Succinate--CoA ligase [ADP-forming] subunit beta.